The primary structure comprises 249 residues: MASQTILELWPSSSLEEVQTIIRAVYKQVLGNPHVMESERLVTAESQLCDRSITVREFVRSVAKSDFYRNRYFQSCAPYRFVELNFLHLLGRAPQDQREVSEHIVRTVAEGYDAEIDSYIDSSEYEAAFGENVVPYYRGRSSEANSKQVGFNRIFALDRGPAQIDSAVKSAQLVYAVATNSANAIKASSSTVIGSGTEKRFKILVQGSKFDSPRRISTTEYIVPASKMTPQIQRINRTSGKIVSITEIV.

The PBS-linker domain occupies 2–166 (ASQTILELWP…LDRGPAQIDS (165 aa)). Residues 198-248 (EKRFKILVQGSKFDSPRRISTTEYIVPASKMTPQIQRINRTSGKIVSITEI) form the CpcD-like domain.

It belongs to the phycobilisome linker protein family. As to quaternary structure, the phycobilisome is a hemidiscoidal structure that is composed of two distinct substructures: a core complex and six rods radiating from the core.

Its subcellular location is the cellular thylakoid membrane. Its function is as follows. Rod linker protein, associated with phycoerythrin. Linker polypeptides determine the state of aggregation and the location of the disk-shaped phycobiliprotein units within the phycobilisome and modulate their spectroscopic properties in order to mediate a directed and optimal energy transfer. This is Phycobilisome 27.9 kDa linker polypeptide, phycoerythrin-associated, rod (cpeD) from Microchaete diplosiphon (Fremyella diplosiphon).